The following is an 805-amino-acid chain: ATP-dependent RNA helicase mak-5 (805 aa).

Positions 1–10 are enriched in basic residues; it reads MAVDKKRKNT. 2 disordered regions span residues 1–33 and 79–189; these read MAVD…KRPV and VPKS…ELET. Residues 85–100 are compositionally biased toward acidic residues; that stretch reads EVEDDGEEFGGFDDEE. 3 stretches are compositionally biased toward basic and acidic residues: residues 110-119, 126-143, and 164-189; these read QEVKTSETKA, AKEK…EQQK, and KNAE…ELET. A Q motif motif is present at residues 209-237; sequence SEWVPLDLSPRMISSIAKLRFSKPTVIQS. The Helicase ATP-binding domain maps to 240–463; it reads IPEIMAGHDV…AGKSKFKATS (224 aa). Position 253 to 260 (253 to 260) interacts with ATP; it reads ASTGSGKT. A DEAD box motif is present at residues 372–375; that stretch reads DEAD. Residues 390–406 show a composition bias toward basic and acidic residues; it reads FKALDRPPVEENNEDQK. The disordered stretch occupies residues 390–435; the sequence is FKALDRPPVEENNEDQKMGGTDEEGQEEEEEDSEEEEEEEEEHVNK. Residues 410–431 are compositionally biased toward acidic residues; sequence TDEEGQEEEEEDSEEEEEEEEE. A Helicase C-terminal domain is found at 510-666; it reads YLYATLMLQP…NSGNNTKKLV (157 aa). The tract at residues 729–751 is disordered; it reads AGKWGGKGSSKKQKQKEAQQMSK.

This sequence belongs to the DEAD box helicase family. DDX24/MAK5 subfamily.

The protein localises to the nucleus. It localises to the nucleolus. The catalysed reaction is ATP + H2O = ADP + phosphate + H(+). ATP-binding RNA helicase involved in the biogenesis of 60S ribosomal subunits and is required for the normal formation of 25S and 5.8S rRNAs. The protein is ATP-dependent RNA helicase mak-5 (mak-5) of Neurospora crassa (strain ATCC 24698 / 74-OR23-1A / CBS 708.71 / DSM 1257 / FGSC 987).